A 171-amino-acid chain; its full sequence is Co-chaperone protein HscB homolog (171 aa).

One can recognise a J domain in the interval 2 to 69 (NHFELFDLPV…DSRAAYLLSL (68 aa)).

The protein belongs to the HscB family. Interacts with HscA and stimulates its ATPase activity.

Co-chaperone involved in the maturation of iron-sulfur cluster-containing proteins. Seems to help targeting proteins to be folded toward HscA. The polypeptide is Co-chaperone protein HscB homolog (Acinetobacter baylyi (strain ATCC 33305 / BD413 / ADP1)).